A 339-amino-acid polypeptide reads, in one-letter code: RNA 3'-terminal phosphate cyclase (339 aa).

ATP-binding positions include Q103 and 283 to 287 (HLADQ). H308 functions as the Tele-AMP-histidine intermediate in the catalytic mechanism.

Belongs to the RNA 3'-terminal cyclase family. Type 1 subfamily.

Its subcellular location is the cytoplasm. The catalysed reaction is a 3'-end 3'-phospho-ribonucleotide-RNA + ATP = a 3'-end 2',3'-cyclophospho-ribonucleotide-RNA + AMP + diphosphate. In terms of biological role, catalyzes the conversion of 3'-phosphate to a 2',3'-cyclic phosphodiester at the end of RNA. The mechanism of action of the enzyme occurs in 3 steps: (A) adenylation of the enzyme by ATP; (B) transfer of adenylate to an RNA-N3'P to produce RNA-N3'PP5'A; (C) and attack of the adjacent 2'-hydroxyl on the 3'-phosphorus in the diester linkage to produce the cyclic end product. The biological role of this enzyme is unknown but it is likely to function in some aspects of cellular RNA processing. The polypeptide is RNA 3'-terminal phosphate cyclase (Salmonella typhimurium (strain LT2 / SGSC1412 / ATCC 700720)).